Here is a 265-residue protein sequence, read N- to C-terminus: Anamorsin homolog 1 (265 aa).

The interval 1 to 143 (MAATVAEALA…KVSWSLGSSF (143 aa)) is N-terminal SAM-like domain. The segment at 144 to 175 (PLKKATKGLPKIQIDDDSELIDEDSLLTEDDL) is linker. Positions 186, 195, 198, and 200 each coordinate [2Fe-2S] cluster. Residues 186-200 (CEVGATRKACKNCTC) are fe-S binding site A. Positions 226, 229, 237, and 240 each coordinate [4Fe-4S] cluster. 2 short sequence motifs (cx2C motif) span residues 226–229 (CGNC) and 237–240 (CGTC). The segment at 226-240 (CGNCGLGDAFRCGTC) is fe-S binding site B.

Belongs to the anamorsin family. As to quaternary structure, monomer. Requires [2Fe-2S] cluster as cofactor. [4Fe-4S] cluster serves as cofactor.

Its subcellular location is the cytoplasm. The protein resides in the mitochondrion intermembrane space. Component of the cytosolic iron-sulfur (Fe-S) protein assembly (CIA) machinery. Required for the maturation of extramitochondrial Fe-S proteins. Part of an electron transfer chain functioning in an early step of cytosolic Fe-S biogenesis, facilitating the de novo assembly of a [4Fe-4S] cluster on the cytosolic Fe-S scaffold complex. Electrons are transferred from NADPH via a FAD- and FMN-containing diflavin oxidoreductase. Together with the diflavin oxidoreductase, also required for the assembly of the diferric tyrosyl radical cofactor of ribonucleotide reductase (RNR), probably by providing electrons for reduction during radical cofactor maturation in the catalytic small subunit. This is Anamorsin homolog 1 from Oryza sativa subsp. japonica (Rice).